A 141-amino-acid polypeptide reads, in one-letter code: Large ribosomal subunit protein uL16 (141 aa).

It belongs to the universal ribosomal protein uL16 family. Part of the 50S ribosomal subunit.

Functionally, binds 23S rRNA and is also seen to make contacts with the A and possibly P site tRNAs. The protein is Large ribosomal subunit protein uL16 of Campylobacter jejuni subsp. jejuni serotype O:6 (strain 81116 / NCTC 11828).